Consider the following 39-residue polypeptide: MDRNQNPNRQPVELNRTSLYLGLLLIAVLGILFSSYFFN.

The chain crosses the membrane as a helical span at residues 18-38 (SLYLGLLLIAVLGILFSSYFF).

Belongs to the PsbL family. In terms of assembly, PSII is composed of 1 copy each of membrane proteins PsbA, PsbB, PsbC, PsbD, PsbE, PsbF, PsbH, PsbI, PsbJ, PsbK, PsbL, PsbM, PsbT, PsbX, PsbY, PsbZ, Psb30/Ycf12, peripheral proteins PsbO, CyanoQ (PsbQ), PsbU, PsbV and a large number of cofactors. It forms dimeric complexes.

Its subcellular location is the cellular thylakoid membrane. One of the components of the core complex of photosystem II (PSII). PSII is a light-driven water:plastoquinone oxidoreductase that uses light energy to abstract electrons from H(2)O, generating O(2) and a proton gradient subsequently used for ATP formation. It consists of a core antenna complex that captures photons, and an electron transfer chain that converts photonic excitation into a charge separation. This subunit is found at the monomer-monomer interface and is required for correct PSII assembly and/or dimerization. This chain is Photosystem II reaction center protein L, found in Crocosphaera subtropica (strain ATCC 51142 / BH68) (Cyanothece sp. (strain ATCC 51142)).